A 943-amino-acid polypeptide reads, in one-letter code: 2-oxoglutarate dehydrogenase E1 component (943 aa).

This sequence belongs to the alpha-ketoglutarate dehydrogenase family. Homodimer. Part of the 2-oxoglutarate dehydrogenase (OGDH) complex composed of E1 (2-oxoglutarate dehydrogenase), E2 (dihydrolipoamide succinyltransferase) and E3 (dihydrolipoamide dehydrogenase); the complex contains multiple copies of the three enzymatic components (E1, E2 and E3). The cofactor is thiamine diphosphate.

The enzyme catalyses N(6)-[(R)-lipoyl]-L-lysyl-[protein] + 2-oxoglutarate + H(+) = N(6)-[(R)-S(8)-succinyldihydrolipoyl]-L-lysyl-[protein] + CO2. Its function is as follows. E1 component of the 2-oxoglutarate dehydrogenase (OGDH) complex which catalyzes the decarboxylation of 2-oxoglutarate, the first step in the conversion of 2-oxoglutarate to succinyl-CoA and CO(2). The sequence is that of 2-oxoglutarate dehydrogenase E1 component (sucA) from Azotobacter vinelandii.